Here is a 304-residue protein sequence, read N- to C-terminus: L-lactate dehydrogenase (304 aa).

NAD(+)-binding positions include V11, D32, R37, and 76-77 (GA). Residues Q79, R85, and 117 to 120 (NPVD) contribute to the substrate site. S138 is a binding site for NAD(+). 143–146 (DSAR) contributes to the substrate binding site. Positions 148 and 163 each coordinate beta-D-fructose 1,6-bisphosphate. H170 acts as the Proton acceptor in catalysis. Position 225 (T225) interacts with substrate.

The protein belongs to the LDH/MDH superfamily. LDH family. Homotetramer.

The protein resides in the cytoplasm. It carries out the reaction (S)-lactate + NAD(+) = pyruvate + NADH + H(+). It functions in the pathway fermentation; pyruvate fermentation to lactate; (S)-lactate from pyruvate: step 1/1. Allosterically activated by fructose 1,6-bisphosphate (FBP). Functionally, catalyzes the conversion of lactate to pyruvate. The sequence is that of L-lactate dehydrogenase from Deinococcus radiodurans (strain ATCC 13939 / DSM 20539 / JCM 16871 / CCUG 27074 / LMG 4051 / NBRC 15346 / NCIMB 9279 / VKM B-1422 / R1).